The following is a 174-amino-acid chain: Transcription antitermination protein NusB (174 aa).

Belongs to the NusB family.

In terms of biological role, involved in transcription antitermination. Required for transcription of ribosomal RNA (rRNA) genes. Binds specifically to the boxA antiterminator sequence of the ribosomal RNA (rrn) operons. The polypeptide is Transcription antitermination protein NusB (Rhodopseudomonas palustris (strain ATCC BAA-98 / CGA009)).